We begin with the raw amino-acid sequence, 561 residues long: Potassium-transporting ATPase potassium-binding subunit (561 aa).

A run of 12 helical transmembrane segments spans residues 5 to 25 (LAAGLQIAFVLAVLAIAYVPV), 60 to 80 (YGYAASVLGFSLASALFLYFL), 86 to 106 (VLPLSDGLSGVSPAVAFNTAI), 130 to 150 (VGLAVQNFVSAAVGMAVAIAL), 177 to 197 (ILLPFSFVIALILLSQGVIQS), 247 to 267 (PTPLSNIVEILAILLIPVCLT), 281 to 301 (LTLLAVMGILWSGLLAVTLAA), 324 to 344 (FGIPGSALFAVATTGTSTGAV), 376 to 396 (GLYGILVLALIAVFVGGLLVG), 415 to 435 (ALSILVMPALVLIGTAITVIL), 491 to 511 (ICMLLGRFLPIIFVLALAGAL), and 533 to 553 (GLLTGTVVLVAALTFFPALAL).

It belongs to the KdpA family. In terms of assembly, the system is composed of three essential subunits: KdpA, KdpB and KdpC.

It localises to the cell membrane. Its function is as follows. Part of the high-affinity ATP-driven potassium transport (or Kdp) system, which catalyzes the hydrolysis of ATP coupled with the electrogenic transport of potassium into the cytoplasm. This subunit binds the extracellular potassium ions and delivers the ions to the membrane domain of KdpB through an intramembrane tunnel. The sequence is that of Potassium-transporting ATPase potassium-binding subunit from Rhodococcus erythropolis (strain PR4 / NBRC 100887).